We begin with the raw amino-acid sequence, 225 residues long: Cardiotrophin-like cytokine factor 1 (225 aa).

A signal peptide spans 1-27; sequence MDLRAGDSWGMLACLCTVLWHLPAVPA. N-linked (GlcNAc...) asparagine glycosylation is present at Asn29.

This sequence belongs to the IL-6 superfamily. In terms of assembly, forms a heteromeric complex with cardiotrophin-like cytokine CRLF1/CLF-1; the CRLF1-CLCF1 complex is a ligand for the ciliary neurotrophic factor receptor/CNTFR. The CRLF1-CLCF1 heterodimer binds SORL1 (via N-terminal ectodomain); within this complex, the interaction is mediated predominantly by the CRLF1 moiety. The tripartite signaling complex formed by CRLF1, CLCF1 and CNTFR also binds SORL1.

The protein resides in the secreted. Its function is as follows. In complex with CRLF1, forms a heterodimeric neurotropic cytokine that plays a crucial role during neuronal development. Also stimulates B-cells. Binds to and activates the ILST/gp130 receptor. The chain is Cardiotrophin-like cytokine factor 1 (Clcf1) from Mus musculus (Mouse).